Reading from the N-terminus, the 239-residue chain is Large ribosomal subunit protein uL2 (239 aa).

A disordered region spans residues 200-239; the sequence is VNHPHGGKEHHIGRPSTVSRRAPPGRKVGHIAARRTGRRK. Residues 222–239 are compositionally biased toward basic residues; that stretch reads PPGRKVGHIAARRTGRRK.

This sequence belongs to the universal ribosomal protein uL2 family. In terms of assembly, part of the 50S ribosomal subunit. Forms a bridge to the 30S subunit in the 70S ribosome.

One of the primary rRNA binding proteins. Required for association of the 30S and 50S subunits to form the 70S ribosome, for tRNA binding and peptide bond formation. It has been suggested to have peptidyltransferase activity; this is somewhat controversial. Makes several contacts with the 16S rRNA in the 70S ribosome. This Thermococcus onnurineus (strain NA1) protein is Large ribosomal subunit protein uL2.